A 423-amino-acid polypeptide reads, in one-letter code: 5-hydroxytryptamine receptor 1A (423 aa).

Residues 1–38 (MEGLSPRQGNNTTSSEGPFGTLGNATGISDVTFSYQVI) are Extracellular-facing. Residues N10, N11, and N24 are each glycosylated (N-linked (GlcNAc...) asparagine). The helical transmembrane segment at 39 to 59 (TSLLLGTLIFCAVLGNACVVA) threads the bilayer. Residues 60–73 (AIALERSLQNVANY) lie on the Cytoplasmic side of the membrane. The helical transmembrane segment at 74 to 98 (LIGSLAVTDLMVSVLVLPMAALYQV) threads the bilayer. Topologically, residues 99 to 107 (LNKWTLGQV) are extracellular. The helical transmembrane segment at 108 to 132 (TCDLFIALDVLCCTSSILHLCAIAL) threads the bilayer. C109 and C187 are oxidised to a cystine. Residues D116 and C120 each coordinate serotonin. A DRY motif; important for ligand-induced conformation changes motif is present at residues 133 to 135 (DRY). The Cytoplasmic portion of the chain corresponds to 133–152 (DRYWAITDPIDYVNKRTPRR). Residues 153–174 (AAALISLTWLIGFLISIPPMLG) traverse the membrane as a helical segment. Topologically, residues 175 to 193 (WRTPEDRSDPDACTISKDH) are extracellular. Residues 194–216 (GYTIYSTFGAFYIPLLLMLVLYG) traverse the membrane as a helical segment. At 217 to 346 (RIFRAARFRI…LARERKTVKT (130 aa)) the chain is on the cytoplasmic side. Positions 235–277 (RKGADARSGVSPAPQPRKSVNGEPGGREWRQGPGSQAGGPLCT) are disordered. 1D-myo-inositol 4-phosphate contacts are provided by K345, T346, and G352. The chain crosses the membrane as a helical span at residues 347–370 (LGIIMGTFILCWLPFFIVALVLPF). Topologically, residues 371 to 378 (CESSCHMP) are extracellular. The chain crosses the membrane as a helical span at residues 379–403 (TLLGAIINWLGYSNSLLNPVIYAYF). The NPxxY motif; important for ligand-induced conformation changes and signaling motif lies at 396–400 (NPVIY). Positions 403, 404, and 405 each coordinate 1D-myo-inositol 4-phosphate. Topologically, residues 404-423 (NKDFQNAFKKIVRCKFCRRR) are cytoplasmic.

The protein belongs to the G-protein coupled receptor 1 family. 5-hydroxytryptamine receptor subfamily. HTR1A sub-subfamily. As to quaternary structure, heterodimer; heterodimerizes with GPER1. Interacts with YIF1B. Interacts with GPR39 and GALR1.

The protein resides in the cell membrane. It localises to the cell projection. Its subcellular location is the dendrite. G-protein coupled receptor activity is regulated by lipids: phosphatidylinositol 4-phosphate increases HTR1A-mediated activity. In terms of biological role, G-protein coupled receptor for 5-hydroxytryptamine (serotonin). Also functions as a receptor for various drugs and psychoactive substances. Ligand binding causes a conformation change that triggers signaling via guanine nucleotide-binding proteins (G proteins) and modulates the activity of downstream effectors, such as adenylate cyclase. HTR1A is coupled to G(i)/G(o) G alpha proteins and mediates inhibitory neurotransmission: signaling inhibits adenylate cyclase activity and activates a phosphatidylinositol-calcium second messenger system that regulates the release of Ca(2+) ions from intracellular stores. Beta-arrestin family members regulate signaling by mediating both receptor desensitization and resensitization processes. This chain is 5-hydroxytryptamine receptor 1A (HTR1A), found in Canis lupus familiaris (Dog).